Here is a 602-residue protein sequence, read N- to C-terminus: Sulfite reductase [NADPH] hemoprotein beta-component (602 aa).

A compositionally biased stretch (basic and acidic residues) spans 1–15 (MDDHKTASPPRERSY). The disordered stretch occupies residues 1 to 24 (MDDHKTASPPRERSYETPPAERPI). [4Fe-4S] cluster contacts are provided by Cys458, Cys464, Cys503, and Cys507. Cys507 is a siroheme binding site.

The protein belongs to the nitrite and sulfite reductase 4Fe-4S domain family. In terms of assembly, alpha(8)-beta(8). The alpha component is a flavoprotein, the beta component is a hemoprotein. Requires siroheme as cofactor. It depends on [4Fe-4S] cluster as a cofactor.

The catalysed reaction is hydrogen sulfide + 3 NADP(+) + 3 H2O = sulfite + 3 NADPH + 4 H(+). The protein operates within sulfur metabolism; hydrogen sulfide biosynthesis; hydrogen sulfide from sulfite (NADPH route): step 1/1. Component of the sulfite reductase complex that catalyzes the 6-electron reduction of sulfite to sulfide. This is one of several activities required for the biosynthesis of L-cysteine from sulfate. In Methylobacterium nodulans (strain LMG 21967 / CNCM I-2342 / ORS 2060), this protein is Sulfite reductase [NADPH] hemoprotein beta-component.